A 1113-amino-acid polypeptide reads, in one-letter code: Period circadian protein homolog 3 (1113 aa).

The disordered stretch occupies residues 1-48; it reads MDPCGDPAVPGGDCPQTRGPGLQGASGQEGPLQGTCVDSSHSEHEDRN. Positions 54 to 63 match the Nuclear export signal 1 motif; the sequence is LIMVVQEMKK. PAS domains follow at residues 120-187 and 258-324; these read LASE…PTQL and YEAP…KVLK. One can recognise a PAC domain in the interval 333-376; the sequence is HSPVRFCTQNGEYVILDSSWSSFVNPWSRKVSFIIGRHKVRTSP. The Nuclear export signal 3 signature appears at 399 to 408; it reads LQEQIHKLLL. A compositionally biased stretch (low complexity) spans 418–427; sequence GYGSLGSSGS. Disordered regions lie at residues 418–451, 485–530, 561–580, 718–742, and 871–906; these read GYGS…GQHE, VAET…SSSY, TSSS…SQRD, HSRC…DTSS, and LVPA…PFIS. 2 stretches are compositionally biased toward polar residues: residues 428–441 and 501–530; these read QEQH…SESS and FSSS…SSSY. A CSNK1E binding domain region spans residues 551–750; sequence LKRKCISCTN…SSPGAHLCPH (200 aa). Positions 566–580 are enriched in basic and acidic residues; the sequence is EEAKPIPEVDSSQRD. Positions 719 to 735 match the Nuclear localization signal motif; sequence SRCAGSERQKHKRKKLP. Positions 889–901 are enriched in basic and acidic residues; sequence RRVEENWEAHSEE. S907 is subject to Phosphoserine. The Nuclear export signal 2 motif lies at 913 to 920; that stretch reads LQLNLLQE. The tract at residues 921 to 1010 is disordered; that stretch reads EMPAPSESAD…DRQRDEALPG (90 aa). Over residues 962–986 the composition is skewed to low complexity; the sequence is ATATAQQESAAASGSSASSIYFSST. The segment covering 993–1007 has biased composition (basic and acidic residues); sequence SENRQRPQDRQRDEA. The tract at residues 1035 to 1113 is CRY binding domain; it reads ERGREEVLKQ…LEQHPAEDTS (79 aa).

As to quaternary structure, homodimer. Component of the circadian core oscillator, which includes the CRY proteins, CLOCK or NPAS2, BMAL1 or BMAL2, CSNK1D and/or CSNK1E, TIMELESS and the PER proteins. Interacts directly with PER1, PER2, CRY1, CRY2, and TIMELESS; interaction with CRY1 and CRY2 is weak and not rhythmic. Interacts with FBXW11 and BTRC. In terms of processing, phosphorylation by CSNK1E is weak and appears to require association with PER1 and translocation to the nucleus. Ubiquitinated. As to expression, widely expressed. Expressed in heart, brain, lung, liver, skeletal muscle, testis, and at low level in the spleen and kidney. In brain, mainly found in the SCN, hippocampus, piriform cortex, and cerebellum. Lower level of expression in the neocortex. Expression exhibits synchronous oscillations in liver, skeletal muscle and testis.

It localises to the cytoplasm. The protein resides in the nucleus. Originally described as a core component of the circadian clock. The circadian clock, an internal time-keeping system, regulates various physiological processes through the generation of approximately 24 hour circadian rhythms in gene expression, which are translated into rhythms in metabolism and behavior. It is derived from the Latin roots 'circa' (about) and 'diem' (day) and acts as an important regulator of a wide array of physiological functions including metabolism, sleep, body temperature, blood pressure, endocrine, immune, cardiovascular, and renal function. Consists of two major components: the central clock, residing in the suprachiasmatic nucleus (SCN) of the brain, and the peripheral clocks that are present in nearly every tissue and organ system. Both the central and peripheral clocks can be reset by environmental cues, also known as Zeitgebers (German for 'timegivers'). The predominant Zeitgeber for the central clock is light, which is sensed by retina and signals directly to the SCN. The central clock entrains the peripheral clocks through neuronal and hormonal signals, body temperature and feeding-related cues, aligning all clocks with the external light/dark cycle. Circadian rhythms allow an organism to achieve temporal homeostasis with its environment at the molecular level by regulating gene expression to create a peak of protein expression once every 24 hours to control when a particular physiological process is most active with respect to the solar day. Transcription and translation of core clock components (CLOCK, NPAS2, BMAL1, BMAL2, PER1, PER2, PER3, CRY1 and CRY2) plays a critical role in rhythm generation, whereas delays imposed by post-translational modifications (PTMs) are important for determining the period (tau) of the rhythms (tau refers to the period of a rhythm and is the length, in time, of one complete cycle). A diurnal rhythm is synchronized with the day/night cycle, while the ultradian and infradian rhythms have a period shorter and longer than 24 hours, respectively. Disruptions in the circadian rhythms contribute to the pathology of cardiovascular diseases, cancer, metabolic syndromes and aging. A transcription/translation feedback loop (TTFL) forms the core of the molecular circadian clock mechanism. Transcription factors, CLOCK or NPAS2 and BMAL1 or BMAL2, form the positive limb of the feedback loop, act in the form of a heterodimer and activate the transcription of core clock genes and clock-controlled genes (involved in key metabolic processes), harboring E-box elements (5'-CACGTG-3') within their promoters. The core clock genes: PER1/2/3 and CRY1/2 which are transcriptional repressors form the negative limb of the feedback loop and interact with the CLOCK|NPAS2-BMAL1|BMAL2 heterodimer inhibiting its activity and thereby negatively regulating their own expression. This heterodimer also activates nuclear receptors NR1D1, NR1D2, RORA, RORB and RORG, which form a second feedback loop and which activate and repress BMAL1 transcription, respectively. Has a redundant role with the other PER proteins PER1 and PER2 and is not essential for the circadian rhythms maintenance. In contrast, plays an important role in sleep-wake timing and sleep homeostasis probably through the transcriptional regulation of sleep homeostasis-related genes, without influencing circadian parameters. Can bind heme. This is Period circadian protein homolog 3 (Per3) from Mus musculus (Mouse).